The chain runs to 234 residues: ATP synthase subunit delta, chloroplastic (234 aa).

Residues 1-47 (MASLQQTLFSLQSKLPPSSFQIARSLPLRKTFPIRINNGGNAAGARM) constitute a chloroplast transit peptide. An N-acetylserine modification is found at serine 48. An N-linked (GlcNAc...) asparagine glycan is attached at asparagine 66. Threonine 234 carries the phosphothreonine modification.

It belongs to the ATPase delta chain family. F-type ATPases have 2 components, F(1) - the catalytic core - and F(0) - the membrane proton channel. F(1) has five subunits: alpha(3), beta(3), gamma(1), delta(1), epsilon(1). CF(0) has four main subunits: a(1), b(1), b'(1) and c(10-14). The alpha and beta chains form an alternating ring which encloses part of the gamma chain. F(1) is attached to F(0) by a central stalk formed by the gamma and epsilon chains, while a peripheral stalk is formed by the delta, b and b' chains.

Its subcellular location is the plastid. It localises to the chloroplast thylakoid membrane. In terms of biological role, f(1)F(0) ATP synthase produces ATP from ADP in the presence of a proton or sodium gradient. F-type ATPases consist of two structural domains, F(1) containing the extramembraneous catalytic core and F(0) containing the membrane proton channel, linked together by a central stalk and a peripheral stalk. During catalysis, ATP synthesis in the catalytic domain of F(1) is coupled via a rotary mechanism of the central stalk subunits to proton translocation (Potential). Essential for photosynthesis, probably by facilitating electron transport in both photosystems I and II. Its function is as follows. This protein is part of the stalk that links CF(0) to CF(1). It either transmits conformational changes from CF(0) to CF(1) or is implicated in proton conduction. The chain is ATP synthase subunit delta, chloroplastic from Arabidopsis thaliana (Mouse-ear cress).